The sequence spans 162 residues: Ribosome maturation factor RimP (162 aa).

It belongs to the RimP family.

Its subcellular location is the cytoplasm. Required for maturation of 30S ribosomal subunits. In Streptococcus gordonii (strain Challis / ATCC 35105 / BCRC 15272 / CH1 / DL1 / V288), this protein is Ribosome maturation factor RimP.